We begin with the raw amino-acid sequence, 265 residues long: Tryptophan synthase alpha chain (265 aa).

Active-site proton acceptor residues include Glu-49 and Asp-60.

It belongs to the TrpA family. In terms of assembly, tetramer of two alpha and two beta chains.

It carries out the reaction (1S,2R)-1-C-(indol-3-yl)glycerol 3-phosphate + L-serine = D-glyceraldehyde 3-phosphate + L-tryptophan + H2O. It functions in the pathway amino-acid biosynthesis; L-tryptophan biosynthesis; L-tryptophan from chorismate: step 5/5. Functionally, the alpha subunit is responsible for the aldol cleavage of indoleglycerol phosphate to indole and glyceraldehyde 3-phosphate. In Cupriavidus taiwanensis (strain DSM 17343 / BCRC 17206 / CCUG 44338 / CIP 107171 / LMG 19424 / R1) (Ralstonia taiwanensis (strain LMG 19424)), this protein is Tryptophan synthase alpha chain.